The following is a 698-amino-acid chain: Elongation factor G (698 aa).

One can recognise a tr-type G domain in the interval 8-284 (ANVRNIGIMA…AVVDFLPSPL (277 aa)). Residues 17–24 (AHIDAGKT), 81–85 (DTPGH), and 135–138 (NKLD) contribute to the GTP site. The segment at 289-309 (IEGTGTDGETPLQRKPSTSEP) is disordered.

The protein belongs to the TRAFAC class translation factor GTPase superfamily. Classic translation factor GTPase family. EF-G/EF-2 subfamily.

It is found in the cytoplasm. Catalyzes the GTP-dependent ribosomal translocation step during translation elongation. During this step, the ribosome changes from the pre-translocational (PRE) to the post-translocational (POST) state as the newly formed A-site-bound peptidyl-tRNA and P-site-bound deacylated tRNA move to the P and E sites, respectively. Catalyzes the coordinated movement of the two tRNA molecules, the mRNA and conformational changes in the ribosome. In Salinispora arenicola (strain CNS-205), this protein is Elongation factor G.